The primary structure comprises 651 residues: MRRFFICYIGFLSIFLDFILADKDNNSEEERDRKFDWKFENENGKPEHETVTVPKLPDGSYFWKWTWNSRINSTTAATPTSTVTTSTSAPTTSPRVYKLKSEARKSLRKALRGVPPEKRKKQLKKMGKKMMKIPKITKKESNKLHKSYRKVKITENPPALDMFEVNERAGLNEYLFQGDINLNNNQIAKISSEQSSKSRRKKRQIDNLAQFWPGKVVYYYFDSGLTTTVQQIVRDAITFLESNTCLKFELNSTATNRIFSGVGCYSDTGMLGGEQTLSLGYGCEVTGTAAHEIAHTLGLFHTQMRSDRDDYVTIDLTDVPESSQQNFIKLTEATSTNLVDYEYGSFMHYSGRAFVSSGGVDSIVPKDPVMVYTMGGRIVTFLDLKMLNTHYSCSCPTILSCGNGGFTNPANCSVCICPYGFGGALCTERTDYGCGSTLTATDTWQQETYTFGNASNSATARPSAVYCNHWIQAPVGKQIQFRIDSTYNTQCVYGCTFNGVEPKLKSDMTITQARYCCDEFNAEIMTADFGVNPMPVFSFNRYYKTTYTWSYRYVDSNVTACADTSDKATCLSLKSAKEQGCSIYDTAQLKVMCAATMDLCGKVASDDGTCKDRFPKSQCSTYSTNGMCTQQPPLAAEFSCAETCGFCTNPV.

An N-terminal signal peptide occupies residues 1 to 21 (MRRFFICYIGFLSIFLDFILA). A propeptide spanning residues 22-202 (DKDNNSEEER…EQSSKSRRKK (181 aa)) is cleaved from the precursor. 3 N-linked (GlcNAc...) asparagine glycosylation sites follow: Asn-25, Asn-72, and Asn-251. Residues 203–394 (RQIDNLAQFW…KMLNTHYSCS (192 aa)) form the Peptidase M12A domain. 6 disulfide bridges follow: Cys-245–Cys-393, Cys-264–Cys-283, Cys-395–Cys-412, Cys-415–Cys-426, Cys-434–Cys-467, and Cys-495–Cys-516. Residue His-291 participates in Zn(2+) binding. The active site involves Glu-292. The Zn(2+) site is built by His-295 and His-301. One can recognise an EGF-like domain in the interval 380–433 (TFLDLKMLNTHYSCSCPTILSCGNGGFTNPANCSVCICPYGFGGALCTERTDYG). Asn-411 carries an N-linked (GlcNAc...) asparagine glycan. A CUB domain is found at 434 to 554 (CGSTLTATDT…TTYTWSYRYV (121 aa)). A glycan (N-linked (GlcNAc...) asparagine) is linked at Asn-453. Asn-557 carries N-linked (GlcNAc...) asparagine glycosylation. 3 disulfide bridges follow: Cys-610/Cys-647, Cys-619/Cys-640, and Cys-628/Cys-644. In terms of domain architecture, ShKT spans 610–647 (CKDRFPKSQCSTYSTNGMCTQQPPLAAEFSCAETCGFC).

Requires Zn(2+) as cofactor. Expressed in pharyngeal, anal depressor, intestinal and vulva muscles, head neurons and head mesodermal cell.

It localises to the secreted. Functionally, metalloprotease. This Caenorhabditis elegans protein is Zinc metalloproteinase nas-32 (nas-32).